The primary structure comprises 433 residues: Pyrimidine-nucleoside phosphorylase (433 aa).

81–83 (KHS) provides a ligand contact to phosphate. Positions 88 and 90 each coordinate K(+). Phosphate contacts are provided by residues Thr92, 108–110 (KMS), and Thr120. Substrate-binding residues include Arg168 and Lys187. 3 residues coordinate K(+): Leu243, Ala246, and Glu255.

This sequence belongs to the thymidine/pyrimidine-nucleoside phosphorylase family. As to quaternary structure, homodimer. K(+) is required as a cofactor.

The catalysed reaction is uridine + phosphate = alpha-D-ribose 1-phosphate + uracil. The enzyme catalyses thymidine + phosphate = 2-deoxy-alpha-D-ribose 1-phosphate + thymine. It carries out the reaction 2'-deoxyuridine + phosphate = 2-deoxy-alpha-D-ribose 1-phosphate + uracil. Catalyzes phosphorolysis of the pyrimidine nucleosides uridine, thymidine and 2'-deoxyuridine with the formation of the corresponding pyrimidine base and ribose-1-phosphate. The sequence is that of Pyrimidine-nucleoside phosphorylase (pdp) from Staphylococcus aureus (strain Mu50 / ATCC 700699).